Consider the following 742-residue polypeptide: Condensin complex subunit 2 (742 aa).

4 disordered regions span residues 1 to 62, 151 to 172, 452 to 473, and 564 to 604; these read MKRA…FNSS, QQTE…KKER, FNSS…STER, and IQPH…PSSS. Basic and acidic residues predominate over residues 21-39; sequence ALEKKRAKENSRKQRELRR. The span at 53-62 shows a compositional bias: polar residues; the sequence is LNNSSPFNSS. Acidic residues predominate over residues 154-165; it reads EEGEDAENDDED. 2 stretches are compositionally biased toward polar residues: residues 452 to 470 and 592 to 604; these read FNSS…SLSS and PKQT…PSSS.

The protein belongs to the CND2 (condensin subunit 2) family. Component of the condensin complex, which contains the cut14/smc2 and cut3/smc2 heterodimer, and three non SMC subunits that probably regulate the complex: cnd1, cnd2 and cnd3.

The protein resides in the nucleus. It is found in the cytoplasm. Its subcellular location is the chromosome. Functionally, regulatory subunit of the condensin complex, a complex required for conversion of interphase chromatin into mitotic-like condense chromosomes. The condensin complex probably introduces positive supercoils into relaxed DNA in the presence of type I topoisomerases and converts nicked DNA into positive knotted forms in the presence of type II topoisomerases. The condensin complex probably also plays a role during interphase in processes such as DNA repair. This Schizosaccharomyces pombe (strain 972 / ATCC 24843) (Fission yeast) protein is Condensin complex subunit 2 (cnd2).